The chain runs to 154 residues: 6,7-dimethyl-8-ribityllumazine synthase (154 aa).

5-amino-6-(D-ribitylamino)uracil is bound by residues Phe-22, 56–58, and 80–82; these read AFE and AVI. Residue 85 to 86 coordinates (2S)-2-hydroxy-3-oxobutyl phosphate; that stretch reads AT. Residue His-88 is the Proton donor of the active site. Residue Phe-113 coordinates 5-amino-6-(D-ribitylamino)uracil. Arg-127 is a binding site for (2S)-2-hydroxy-3-oxobutyl phosphate.

The protein belongs to the DMRL synthase family.

It catalyses the reaction (2S)-2-hydroxy-3-oxobutyl phosphate + 5-amino-6-(D-ribitylamino)uracil = 6,7-dimethyl-8-(1-D-ribityl)lumazine + phosphate + 2 H2O + H(+). It participates in cofactor biosynthesis; riboflavin biosynthesis; riboflavin from 2-hydroxy-3-oxobutyl phosphate and 5-amino-6-(D-ribitylamino)uracil: step 1/2. Functionally, catalyzes the formation of 6,7-dimethyl-8-ribityllumazine by condensation of 5-amino-6-(D-ribitylamino)uracil with 3,4-dihydroxy-2-butanone 4-phosphate. This is the penultimate step in the biosynthesis of riboflavin. This is 6,7-dimethyl-8-ribityllumazine synthase from Desulfitobacterium hafniense (strain DSM 10664 / DCB-2).